Consider the following 147-residue polypeptide: MVHFTAEEKAAIASLWGQVNVEETGGEALGRLLVVYPWTQRFFDTFGNLSSASAIMGNPRVKAHGKKVLTSFGDAVKNLDNLKGTFAKLSELHCDKLHVDPENFRLLGNVLVIVLANHFGKEFTPQVQAAWQKMVTGVANALAYKYH.

Residues 3 to 147 (HFTAEEKAAI…VANALAYKYH (145 aa)) enclose the Globin domain. His64 and His93 together coordinate heme b.

The protein belongs to the globin family. In terms of assembly, heterotetramer of two alpha chains and two gamma chains in fetal hemoglobin (Hb F). Red blood cells.

Functionally, gamma chains make up the fetal hemoglobin F, in combination with alpha chains. This Loxodonta africana (African elephant) protein is Hemoglobin subunit gamma (HBG).